A 29-amino-acid polypeptide reads, in one-letter code: Cyclotide vibi-D (29 aa).

The segment at residues 1 to 29 (GLPVCGETCFGGRCNTPGCTCSYPICTRN) is a cross-link (cyclopeptide (Gly-Asn)). 3 disulfides stabilise this stretch: Cys-5/Cys-19, Cys-9/Cys-21, and Cys-14/Cys-26.

This is a cyclic peptide.

In terms of biological role, probably participates in a plant defense mechanism. Has moderate levels of cytotoxic activity, active against a human lymphoma cell line with an IC(50) of &gt;30 uM. The sequence is that of Cyclotide vibi-D from Viola biflora (Yellow wood violet).